The following is a 1939-amino-acid chain: MSSDQEMAIFGEAAPYLRKSEKERIEAQNKPFDAKTSVFVAEPKESFVKGTVQSREGGKVTVKTEAGATLTVKEDQVFPMNPPKFDKIEDMAMMTHLHEPAVLYNLKERYAAWMIYTYSGLFCVTVNPYKWLPVYNAEVVTAYRGKKRQEAPPHIFSISDNAYQFMLTDRENQSILITGESGAGKTVNTKRVIQYFATIAVTGEKKKEEPTSGKMQGTLEDQIISANPLLEAFGNAKTVRNDNSSRFGKFIRIHFGTTGKLASADIETYLLEKSRVTFQLKAERSYHIFYQIMSNKKPELIEMLLITTNPYDYAFVSQGEITVPSIDDQEELMATDSAIEILGFTSDERVSIYKLTGAVMHYGNLKFKQKQREEQAEPDGTEVADKAAYLQGLNSADLLKALCYPRVKVGNEFVTKGQTVQQVYNAVGALAKAVYDKMFLWMVTRINQQLDTKQPRQYFIGVLDIAGFEIFDFNSLEQLCINFTNEKLQQFFNHHMFVLEQEEYKKEGIEWEFIDFGMDLAACIELIEKPMGIFSILEEECMFPKATDTSFKNKLYEQHLGKSNNFQKPKPAKGKVEAHFSLIHYAGTVDYNITGWLDKNKDPLNETVVGLYQKSSVKTLAFLFTGAAGADAEAGGGKKGGKKKGSSFQTVSALFRENLNKLMTNLRSTHPHFVRCIIPNETKTPGAMEHELVLHQLRCNGVLEGIRICRKGFPSRILYADFKQRYKVLNASAIPEGQFIDSKKASEKLLGSIDIDHTQYKFGHTKVFFKAGLLGLLEEMRDEKLAQLITRTQARCRGFLARVEYQKMVERRESIFCIQYNIRAFMNVKHWPWMKLYFKIKPLLKSAETEKEMANMKEEFEKTKESLAKAEAKRKELEEKMVALMQEKNDLQLQVQAEADSLADAEERCDQLIKTKIQLEAKIKEVTERAEDEEEINAELTAKKRKLEDECSELKKDIDDLELTLAKVEKEKHATENKVKNLTEEMAGLDETIAKLTKEKKALQEAHQQTLDDLQAEEDKVNTLTKAKTKLEQQVDDLEGSLEQEKKLRMDLERAKRKLEGDLKLAQESTMDIENDKQQLDEKLKKKEFEMSNLQSKIEDEQALAMQLQKKIKELQARIEELEEEIEAERASRAKAEKQRSDLSRELEEISERLEEAGGATSAQIEMNKKREAEFQKMRRDLEEATLQHEATAATLRKKHADSVAELGEQIDNLQRVKQKLEKEKSEMKMEIDDLASNMETVSKAKGNLEKMCRTLEDQLSELKTKEEEQQRLINDLTAQRARLQTESGEYSRQLDEKDTLVSQLSRGKQAFTQQIEELKRQLEEEIKAKSALAHAVQSSRHDCDLLREQYEEEQEAKAELQRAMSKANSEVAQWRTKYETDAIQRTEELEEAKKKLAQRLQDAEEHVEAVNAKCASLEKTKQRLQNEVEDLMIDVERSNAACAALDKKQRNFDKILAEWKQKYEETHAELEASQKESRSLSTELFKVKNAYEESLDQLETLKRENKNLQQEISDLTEQIAEGGKRIHELEKIKKQVEQEKSEIQAALEEAEASLEHEEGKILRIQLELNQVKSEVDRKIAEKDEEIDQLKRNHVRVVESMQSMLDAEIRSRNDAIRLKKKMEGDLNEMEIQLNHANRMAAEALRNYRNTQGILKDTQIHLDDALRSQEDLKEQLAMVERRANLLQAEIEELRATLEQTERSRKVAEQELLDASERVQLLHTQNTSLINTKKKLETDISQIQGEMEDIIQEARNAEEKAKKAITDAAMMAEELKKEQDTSAHLERMKKNLEQTVKDLQHRLDEAEQLALKGGKKQIQKLEARVRELEGEVESEQKRNVETVKGLRKHERRVKELTYQTEEDRKNILRLQDLVDKLQAKVKSYKRQAEEAEEQSNVNLSKFRKLQHELEEAEERADIAESQVNKLRVKSREVHTKIISEE.

Residues 33–82 form the Myosin N-terminal SH3-like domain; it reads DAKTSVFVAEPKESFVKGTVQSREGGKVTVKTEAGATLTVKEDQVFPMNP. T64 and T69 each carry phosphothreonine. A Myosin motor domain is found at 86–782; it reads DKIEDMAMMT…LLGLLEEMRD (697 aa). K130 carries the post-translational modification N6,N6,N6-trimethyllysine. 179-186 is an ATP binding site; sequence GESGAGKT. A Phosphotyrosine modification is found at Y389. A Phosphothreonine modification is found at T419. Y424 carries the post-translational modification Phosphotyrosine. The tract at residues 659–681 is actin-binding; the sequence is LNKLMTNLRSTHPHFVRCIIPNE. Residue H757 is modified to Pros-methylhistidine. The actin-binding stretch occupies residues 761 to 775; sequence KFGHTKVFFKAGLLG. The 30-residue stretch at 785 to 814 folds into the IQ domain; that stretch reads LAQLITRTQARCRGFLARVEYQKMVERRES. Residues 843–1939 adopt a coiled-coil conformation; the sequence is LLKSAETEKE…EVHTKIISEE (1097 aa). Residues S1092 and S1096 each carry the phosphoserine modification. Disordered regions lie at residues 1125 to 1147 and 1153 to 1172; these read EIEA…SREL and RLEE…KKRE. Basic and acidic residues predominate over residues 1128–1147; it reads AERASRAKAEKQRSDLSREL. A phosphoserine mark is found at S1162 and S1237. T1241 is modified (phosphothreonine). S1243 is subject to Phosphoserine. Residue T1255 is modified to Phosphothreonine. S1261 carries the post-translational modification Phosphoserine. Phosphothreonine occurs at positions 1265 and 1286. A phosphoserine mark is found at S1288, S1292, S1303, and S1306. Y1464 carries the post-translational modification Phosphotyrosine. Phosphothreonine is present on T1467. S1474 carries the phosphoserine modification. Phosphotyrosine is present on Y1492. S1495 bears the Phosphoserine mark. T1501 carries the post-translational modification Phosphothreonine. S1514 is modified (phosphoserine). Phosphothreonine is present on T1517. 7 positions are modified to phosphoserine: S1542, S1554, S1574, S1600, S1603, S1714, and S1726. Phosphothreonine occurs at positions 1730 and 1736. The residue at position 1739 (S1739) is a Phosphoserine.

It belongs to the TRAFAC class myosin-kinesin ATPase superfamily. Myosin family. In terms of assembly, muscle myosin is a hexameric protein that consists of 2 heavy chain subunits (MHC), 2 alkali light chain subunits (MLC) and 2 regulatory light chain subunits (MLC-2). Interacts with SLC26A5.

Its subcellular location is the cytoplasm. It is found in the myofibril. Required for normal hearing. It plays a role in cochlear amplification of auditory stimuli, likely through the positive regulation of prestin (SLC26A5) activity and outer hair cell (OHC) electromotility. The protein is Myosin-1 (MYH1) of Sus scrofa (Pig).